Reading from the N-terminus, the 278-residue chain is Pantothenate synthetase (278 aa).

Residue 26–33 (MGNLHEGH) participates in ATP binding. His33 serves as the catalytic Proton donor. Gln57 contributes to the (R)-pantoate binding site. Residue Gln57 participates in beta-alanine binding. ATP is bound at residue 144-147 (GKKD). Gln150 provides a ligand contact to (R)-pantoate. Residues Gly173 and 181-184 (LSSR) each bind ATP.

This sequence belongs to the pantothenate synthetase family. As to quaternary structure, homodimer.

It is found in the cytoplasm. It carries out the reaction (R)-pantoate + beta-alanine + ATP = (R)-pantothenate + AMP + diphosphate + H(+). It functions in the pathway cofactor biosynthesis; (R)-pantothenate biosynthesis; (R)-pantothenate from (R)-pantoate and beta-alanine: step 1/1. Catalyzes the condensation of pantoate with beta-alanine in an ATP-dependent reaction via a pantoyl-adenylate intermediate. The protein is Pantothenate synthetase of Neisseria meningitidis serogroup B (strain ATCC BAA-335 / MC58).